Here is a 439-residue protein sequence, read N- to C-terminus: GTPase Der (439 aa).

2 EngA-type G domains span residues 4-168 (PIVA…KDDE) and 177-352 (INIA…DNYT). GTP is bound by residues 10-17 (GRPNVGKS), 57-61 (DTGGI), 120-123 (NKID), 183-190 (GKPNVGKS), 230-234 (DTAGL), and 295-298 (NKWD). In terms of domain architecture, KH-like spans 353–437 (KRVKTGVLND…GIKLEFRERK (85 aa)).

The protein belongs to the TRAFAC class TrmE-Era-EngA-EngB-Septin-like GTPase superfamily. EngA (Der) GTPase family. In terms of assembly, associates with the 50S ribosomal subunit.

Functionally, GTPase that plays an essential role in the late steps of ribosome biogenesis. This chain is GTPase Der, found in Clostridium botulinum (strain Kyoto / Type A2).